The following is a 238-amino-acid chain: MRPSRRANDEMRAVSFERGVLRHAEGSCLVKFGDTHVLVAATLEERLPPWLKGQGRGWVTAEYSMLPRATLERTRREATTGKQSGRTQEIQRLIGRSLRSVTDLVGLGERQITLDCDVLQADGGTRTAAITGAWVALHDCLNWMYQRSMLKTIPLKENVAAISCGIHEGTPVLDLDYAEDSKAETDANFVMTGTGGIVEIQGTAEKTPFSQDELLSLLALARKGVGELVELQKQAIKA.

Phosphate-binding positions include Arg-86 and 124–126; that span reads GTR.

The protein belongs to the RNase PH family. Homohexameric ring arranged as a trimer of dimers.

It catalyses the reaction tRNA(n+1) + phosphate = tRNA(n) + a ribonucleoside 5'-diphosphate. In terms of biological role, phosphorolytic 3'-5' exoribonuclease that plays an important role in tRNA 3'-end maturation. Removes nucleotide residues following the 3'-CCA terminus of tRNAs; can also add nucleotides to the ends of RNA molecules by using nucleoside diphosphates as substrates, but this may not be physiologically important. Probably plays a role in initiation of 16S rRNA degradation (leading to ribosome degradation) during starvation. The chain is Ribonuclease PH from Azorhizobium caulinodans (strain ATCC 43989 / DSM 5975 / JCM 20966 / LMG 6465 / NBRC 14845 / NCIMB 13405 / ORS 571).